The sequence spans 134 residues: Small ribosomal subunit protein uS11 (134 aa).

The protein belongs to the universal ribosomal protein uS11 family. As to quaternary structure, part of the 30S ribosomal subunit. Interacts with proteins S7 and S18. Binds to IF-3.

Its function is as follows. Located on the platform of the 30S subunit, it bridges several disparate RNA helices of the 16S rRNA. Forms part of the Shine-Dalgarno cleft in the 70S ribosome. The sequence is that of Small ribosomal subunit protein uS11 from Salinibacter ruber (strain DSM 13855 / M31).